A 243-amino-acid chain; its full sequence is DNA repair protein RecO (243 aa).

Belongs to the RecO family.

Its function is as follows. Involved in DNA repair and RecF pathway recombination. This is DNA repair protein RecO from Thermobifida fusca (strain YX).